Reading from the N-terminus, the 229-residue chain is C-&gt;U-editing enzyme APOBEC-1 (229 aa).

The CMP/dCMP-type deaminase domain occupies 10-134; sequence VDPTLRRRIE…PRNRQGLRDL (125 aa). Histidine 61 serves as a coordination point for Zn(2+). Residue glutamate 63 is the Proton donor of the active site. Zn(2+)-binding residues include cysteine 93 and cysteine 96.

Belongs to the cytidine and deoxycytidylate deaminase family. In terms of assembly, homodimer. Interacts with A1CF; form an mRNA editing complex. Interacts with RBM47; form an mRNA editing complex. Found in a complex with CELF2/CUGBP2 and A1CF. Interacts with HNRPAB. Interacts with SYNCRIP. Zn(2+) serves as cofactor. As to expression, expressed in the liver as well as small intestine.

It is found in the cytoplasm. Its subcellular location is the nucleus. It carries out the reaction a cytidine in mRNA + H2O + H(+) = a uridine in mRNA + NH4(+). The enzyme catalyses cytidine(6666) in apoB mRNA + H2O + H(+) = uridine(6666) in apoB mRNA + NH4(+). Cytidine deaminase catalyzing the cytidine to uridine postranscriptional editing of a variety of mRNAs. Form complexes with cofactors that confer differential editing activity and selectivity. Responsible for the postranscriptional editing of a CAA codon for Gln to a UAA codon for stop in the apolipoprotein B mRNA. Also involved in CGA (Arg) to UGA (Stop) editing in the NF1 mRNA. May also play a role in the epigenetic regulation of gene expression by participating in DNA demethylation. This Rattus norvegicus (Rat) protein is C-&gt;U-editing enzyme APOBEC-1.